We begin with the raw amino-acid sequence, 383 residues long: ATP phosphoribosyltransferase regulatory subunit (383 aa).

It belongs to the class-II aminoacyl-tRNA synthetase family. HisZ subfamily. In terms of assembly, heteromultimer composed of HisG and HisZ subunits.

The protein resides in the cytoplasm. It functions in the pathway amino-acid biosynthesis; L-histidine biosynthesis; L-histidine from 5-phospho-alpha-D-ribose 1-diphosphate: step 1/9. Required for the first step of histidine biosynthesis. May allow the feedback regulation of ATP phosphoribosyltransferase activity by histidine. The polypeptide is ATP phosphoribosyltransferase regulatory subunit (Neisseria gonorrhoeae (strain NCCP11945)).